Here is a 41-residue protein sequence, read N- to C-terminus: Disintegrin obtustatin (41 aa).

4 cysteine pairs are disulfide-bonded: cysteine 1-cysteine 10, cysteine 6-cysteine 29, cysteine 7-cysteine 34, and cysteine 19-cysteine 36. Positions 1 to 41 (CTTGPCCRQCKLKPAGTTCWKTSLTSHYCTGKSCDCPLYPG) constitute a Disintegrin domain. Residues 21-23 (KTS) carry the Cell attachment site; atypical (KTS) motif.

Belongs to the disintegrin family. Short disintegrin subfamily. In terms of assembly, monomer. In terms of tissue distribution, expressed by the venom gland.

The protein resides in the secreted. Is a potent and selective inhibitor of alpha-1/beta-1 (ITGA1/ITGB1) integrin. It blocks the adhesion of alpha-1/beta-1-expressing K562 cells to immobilized collagens IV and I with IC(50) of 2 and 0.5 nM, respectively. Potently inhibits angiogenesis in chicken and in mouse model and reduces tumor development by half. Is 25-fold less potent than viperistatin. This is Disintegrin obtustatin from Macrovipera lebetina obtusa (Levant blunt-nosed viper).